The sequence spans 253 residues: 5'/3'-nucleotidase SurE (253 aa).

Positions 8, 9, 39, and 92 each coordinate a divalent metal cation.

The protein belongs to the SurE nucleotidase family. A divalent metal cation serves as cofactor.

The protein localises to the cytoplasm. The enzyme catalyses a ribonucleoside 5'-phosphate + H2O = a ribonucleoside + phosphate. The catalysed reaction is a ribonucleoside 3'-phosphate + H2O = a ribonucleoside + phosphate. It carries out the reaction [phosphate](n) + H2O = [phosphate](n-1) + phosphate + H(+). In terms of biological role, nucleotidase with a broad substrate specificity as it can dephosphorylate various ribo- and deoxyribonucleoside 5'-monophosphates and ribonucleoside 3'-monophosphates with highest affinity to 3'-AMP. Also hydrolyzes polyphosphate (exopolyphosphatase activity) with the preference for short-chain-length substrates (P20-25). Might be involved in the regulation of dNTP and NTP pools, and in the turnover of 3'-mononucleotides produced by numerous intracellular RNases (T1, T2, and F) during the degradation of various RNAs. The protein is 5'/3'-nucleotidase SurE of Enterobacter sp. (strain 638).